Here is a 196-residue protein sequence, read N- to C-terminus: Probable GTP-binding protein EngB (196 aa).

The region spanning 22 to 193 is the EngB-type G domain; the sequence is SLPEVAFVGR…LEEIRKAKGE (172 aa). GTP contacts are provided by residues 30–37, 57–61, 75–78, 142–145, and 172–174; these read GRSNVGKS, GRTQL, DLPG, TKSD, and FSA. Mg(2+) contacts are provided by Ser-37 and Thr-59.

It belongs to the TRAFAC class TrmE-Era-EngA-EngB-Septin-like GTPase superfamily. EngB GTPase family. The cofactor is Mg(2+).

Necessary for normal cell division and for the maintenance of normal septation. This chain is Probable GTP-binding protein EngB, found in Syntrophus aciditrophicus (strain SB).